A 465-amino-acid polypeptide reads, in one-letter code: GDNF family receptor alpha-1 (465 aa).

The first 24 residues, 1-24 (MFLATLYFALPLLDLLLSAEVSGG), serve as a signal peptide directing secretion. 3 consecutive repeat copies span residues 25–113 (DRLD…LQGN), 150–238 (KGNN…YEER), and 239–342 (EKPN…KNAI). A disulfide bond links C36 and C42. N59 carries N-linked (GlcNAc...) asparagine glycosylation. Cystine bridges form between C154-C214, C161-C167, C178-C192, C187-C233, C216-C221, C243-C313, C250-C256, C267-C285, C277-C337, and C315-C325. N-linked (GlcNAc...) asparagine glycans are attached at residues N347 and N406. Residue S429 is the site of GPI-anchor amidated serine attachment. Positions 430-465 (HITTKSMAAPPSCGLSPLLVLVVTALSTLLSLTETS) are cleaved as a propeptide — removed in mature form.

It belongs to the GDNFR family. As to quaternary structure, interacts with GDNF ligand and RET: forms a 2:2:2 ternary complex composed of GDNF ligand, GFRA1 and RET receptor. Interacts with SORL1, either alone or in complex with GDNF. Interaction between SORL1 and GFRA1 leads to GFRA1 internalization, but not degradation.

Its subcellular location is the cell membrane. It localises to the golgi apparatus. It is found in the trans-Golgi network. The protein localises to the endosome. The protein resides in the multivesicular body. Its function is as follows. Coreceptor for GDNF, a neurotrophic factor that enhances survival and morphological differentiation of dopaminergic neurons and increases their high-affinity dopamine uptake. GDNF-binding leads to autophosphorylation and activation of the RET receptor. The polypeptide is GDNF family receptor alpha-1 (GFRA1) (Homo sapiens (Human)).